The sequence spans 388 residues: Chorismate synthase (388 aa).

The NADP(+) site is built by R39 and R45. FMN is bound by residues 130–132 (RSS), 251–252 (NA), G296, 311–315 (KPIPT), and R337.

This sequence belongs to the chorismate synthase family. In terms of assembly, homotetramer. FMNH2 is required as a cofactor.

The enzyme catalyses 5-O-(1-carboxyvinyl)-3-phosphoshikimate = chorismate + phosphate. It functions in the pathway metabolic intermediate biosynthesis; chorismate biosynthesis; chorismate from D-erythrose 4-phosphate and phosphoenolpyruvate: step 7/7. Catalyzes the anti-1,4-elimination of the C-3 phosphate and the C-6 proR hydrogen from 5-enolpyruvylshikimate-3-phosphate (EPSP) to yield chorismate, which is the branch point compound that serves as the starting substrate for the three terminal pathways of aromatic amino acid biosynthesis. This reaction introduces a second double bond into the aromatic ring system. In Streptococcus pyogenes serotype M3 (strain SSI-1), this protein is Chorismate synthase.